A 349-amino-acid chain; its full sequence is Phenylalanine--tRNA ligase alpha subunit (349 aa).

Glu-264 serves as a coordination point for Mg(2+).

This sequence belongs to the class-II aminoacyl-tRNA synthetase family. Phe-tRNA synthetase alpha subunit type 1 subfamily. In terms of assembly, tetramer of two alpha and two beta subunits. It depends on Mg(2+) as a cofactor.

The protein resides in the cytoplasm. It catalyses the reaction tRNA(Phe) + L-phenylalanine + ATP = L-phenylalanyl-tRNA(Phe) + AMP + diphosphate + H(+). The protein is Phenylalanine--tRNA ligase alpha subunit of Myxococcus xanthus (strain DK1622).